Reading from the N-terminus, the 304-residue chain is MNEQHAQSDRPPTVRPMDFLLVTGLSGAGLQTAAKVLEDLGWYVADNLPPELISRMVDLSLESDSRLERLAVVIDVRSRLFTGDLGWVLTELESKPVHTRVLYLDASDEVLVRRFEQVRRSHPLSGGGAEGTLSEGIAAERDQLAKVKAAADLVIDTSSLAAHQLRQKIEDAFGDAENRTMQVTVQSFGFKYGLPMDADLVCDVRFLPNPHWIPELRPHTGQSEDVRDYVLSQDGAEDYLATYHHLLDLTIAGYRREGKRYMTIAVGCTGGKHRSVAMSEALASRLGKDSGLNVRVVHRDLGRE.

24-31 (GLSGAGLQ) provides a ligand contact to ATP. 75 to 78 (DVRS) is a GTP binding site.

It belongs to the RapZ-like family.

Displays ATPase and GTPase activities. The sequence is that of Nucleotide-binding protein RHA1_ro07174 from Rhodococcus jostii (strain RHA1).